Reading from the N-terminus, the 339-residue chain is Olfactory receptor 7E24 (339 aa).

At 1–43 the chain is on the extracellular side; the sequence is MSYFPILFFFFLKRCPSYTEPQNLTGVSEFLLLGLSEDPELQP. N23 is a glycosylation site (N-linked (GlcNAc...) asparagine). Residues 44–64 form a helical membrane-spanning segment; the sequence is VLAGLFLSMYLVTVLGNLLII. The Cytoplasmic segment spans residues 65–72; that stretch reads LAVSSDSH. Residues 73 to 93 form a helical membrane-spanning segment; that stretch reads LHTPMYFFLSNLSLADIGFTS. The Extracellular segment spans residues 94-117; the sequence is TTVPKMIVDMQTHSRVISYEGCLT. C115 and C207 are joined by a disulfide. A helical membrane pass occupies residues 118-138; sequence QMSFFVLFACMDDMLLSVMAY. Residues 139–157 are Cytoplasmic-facing; that stretch reads DRFVAICHPLHYRIIMNPR. Residues 158 to 178 traverse the membrane as a helical segment; sequence LCGFLILLSFFISLLDSQLHN. At 179-215 the chain is on the extracellular side; the sequence is LIMLQLTCFKDVDISNFFCDPSQLLHLRCSDTFINEM. The chain crosses the membrane as a helical span at residues 216-235; the sequence is VIYFMGAIFGCLPISGILFS. Residues 236 to 255 lie on the Cytoplasmic side of the membrane; it reads YYKIVSPILRVPTSDGKYKA. The chain crosses the membrane as a helical span at residues 256-276; that stretch reads FSTCGSHLAVVCLFYGTGLVG. The Extracellular portion of the chain corresponds to 277–289; the sequence is YLSSAVLPSPRKS. A helical membrane pass occupies residues 290 to 310; the sequence is MVASVMYTVVTPMLNPFIYSL. Topologically, residues 311-339 are cytoplasmic; that stretch reads RNKDIQSALCRLHGRIIKSHHLHPFCYMG.

Belongs to the G-protein coupled receptor 1 family.

The protein resides in the cell membrane. Its function is as follows. Odorant receptor. This chain is Olfactory receptor 7E24 (OR7E24), found in Homo sapiens (Human).